Reading from the N-terminus, the 244-residue chain is 1-(5-phosphoribosyl)-5-[(5-phosphoribosylamino)methylideneamino] imidazole-4-carboxamide isomerase (244 aa).

The active-site Proton acceptor is Asp-10. The Proton donor role is filled by Asp-129.

The protein belongs to the HisA/HisF family.

The protein resides in the cytoplasm. It carries out the reaction 1-(5-phospho-beta-D-ribosyl)-5-[(5-phospho-beta-D-ribosylamino)methylideneamino]imidazole-4-carboxamide = 5-[(5-phospho-1-deoxy-D-ribulos-1-ylimino)methylamino]-1-(5-phospho-beta-D-ribosyl)imidazole-4-carboxamide. It functions in the pathway amino-acid biosynthesis; L-histidine biosynthesis; L-histidine from 5-phospho-alpha-D-ribose 1-diphosphate: step 4/9. This chain is 1-(5-phosphoribosyl)-5-[(5-phosphoribosylamino)methylideneamino] imidazole-4-carboxamide isomerase, found in Rhodococcus erythropolis (strain PR4 / NBRC 100887).